Reading from the N-terminus, the 366-residue chain is Reticulon-4-interacting protein 1, mitochondrial (366 aa).

A mitochondrion-targeting transit peptide spans Met1–Ala20.

The protein belongs to the zinc-containing alcohol dehydrogenase family. Quinone oxidoreductase subfamily. In terms of tissue distribution, expressed in pharynx, muscles and intestine.

It is found in the mitochondrion. Its function is as follows. Plays a role in oxygen metabolism in the mitochondria by regulating the levels of reactive oxygen species (ROS) thereby conferring resistance to oxidative stress. Involved in resistance to P.aeruginosa PA14 infection. Regulates lifespan. The polypeptide is Reticulon-4-interacting protein 1, mitochondrial (Caenorhabditis elegans).